The sequence spans 272 residues: NH(3)-dependent NAD(+) synthetase (272 aa).

45-52 provides a ligand contact to ATP; it reads GISGGQDS. D51 is a Mg(2+) binding site. Position 138 (R138) interacts with deamido-NAD(+). T158 serves as a coordination point for ATP. E163 contacts Mg(2+). 2 residues coordinate deamido-NAD(+): K171 and D178. The ATP site is built by K187 and T209. Residue 258–259 participates in deamido-NAD(+) binding; the sequence is HK.

It belongs to the NAD synthetase family. Homodimer.

It catalyses the reaction deamido-NAD(+) + NH4(+) + ATP = AMP + diphosphate + NAD(+) + H(+). The protein operates within cofactor biosynthesis; NAD(+) biosynthesis; NAD(+) from deamido-NAD(+) (ammonia route): step 1/1. Catalyzes the ATP-dependent amidation of deamido-NAD to form NAD. Uses ammonia as a nitrogen source. The polypeptide is NH(3)-dependent NAD(+) synthetase (Bacillus cereus (strain ATCC 10987 / NRS 248)).